The chain runs to 284 residues: MAITSEKKKNLKSLDKIDIKLLEKTIRALLQHIRSSDKPIEKEKVYIQVNTFQPVEKESLRRPSKVFLPHRIMHVTDACLIVKDSQQTYQDLVEQQGLDEVITKVLSIPRLKLKYKTIREKCELRDSHNLFLVDDRVLKYIPLLMGKVFEQKKIKPFPISVLQKKETLRNQVARCLHSTYLKLSAGTSHTILCGLATQTNEQLLENITTVLKCLLTNFIPKGWSAIDNVAIKTADSASLPIWTSDTNLAAHKRHIVHIQDARPLKKSELRAQKRGSSGEGKGNK.

The tract at residues 264-284 (LKKSELRAQKRGSSGEGKGNK) is disordered.

It belongs to the universal ribosomal protein uL1 family. Highly divergent. Component of the 90S pre-ribosomes.

It localises to the nucleus. Its subcellular location is the nucleolus. Involved in rRNA-processing and ribosome biosynthesis. In Schizosaccharomyces pombe (strain 972 / ATCC 24843) (Fission yeast), this protein is Putative ribosome biogenesis protein C306.07c.